We begin with the raw amino-acid sequence, 426 residues long: Serine hydroxymethyltransferase (426 aa).

Residues L115 and 119–121 contribute to the (6S)-5,6,7,8-tetrahydrofolate site; that span reads GHI. An N6-(pyridoxal phosphate)lysine modification is found at K225.

This sequence belongs to the SHMT family. Homodimer. Pyridoxal 5'-phosphate serves as cofactor.

The protein localises to the cytoplasm. It participates in amino-acid biosynthesis; glycine biosynthesis; glycine from L-serine: step 1/1. In terms of biological role, catalyzes the reversible interconversion of serine and glycine with a modified folate serving as the one-carbon carrier. Also exhibits a pteridine-independent aldolase activity toward beta-hydroxyamino acids, producing glycine and aldehydes, via a retro-aldol mechanism. The protein is Serine hydroxymethyltransferase of Thermoplasma volcanium (strain ATCC 51530 / DSM 4299 / JCM 9571 / NBRC 15438 / GSS1).